The primary structure comprises 285 residues: Neuralized-like protein 2 (285 aa).

Residues methionine 1 to glutamine 28 are disordered. The NHR domain maps to proline 23–leucine 244. Positions serine 250–glutamate 285 constitute an SOCS box domain.

Probable component the ECS(NEURL2) E3 ubiquitin-protein ligase complex consisting of ELOB/Elongin B, ELOC/Elongin C, CUL5, RBX1 and NEURL2. Interacts with CTNNB1. In terms of tissue distribution, expressed specifically in skeletal and cardiac muscles.

It is found in the cytoplasm. It functions in the pathway protein modification; protein ubiquitination. Its function is as follows. Plays an important role in the process of myofiber differentiation and maturation. Probable substrate-recognition component of a SCF-like ECS (Elongin BC-CUL2/5-SOCS-box protein) E3 ubiquitin-protein ligase complex, which mediates the ubiquitination of proteins. Probably contributes to catalysis through recognition and positioning of the substrate and the ubiquitin-conjugating enzyme. During myogenesis, controls the ubiquitination and degradation of the specific pool of CTNNB1/beta-catenin located at the sarcolemma. The chain is Neuralized-like protein 2 (Neurl2) from Mus musculus (Mouse).